Consider the following 397-residue polypeptide: Elongation factor Tu (397 aa).

The tr-type G domain maps to 10-207 (KPHVNIGTIG…ACDSYIPEPQ (198 aa)). A G1 region spans residues 19 to 26 (GHIDHGKT). Residue 19 to 26 (GHIDHGKT) participates in GTP binding. Thr-26 provides a ligand contact to Mg(2+). The tract at residues 60-64 (GITIA) is G2. The interval 81–84 (DCPG) is G3. Residues 81–85 (DCPGH) and 136–139 (NKCD) contribute to the GTP site. Residues 136 to 139 (NKCD) form a G4 region. Positions 174 to 176 (SAL) are G5.

This sequence belongs to the TRAFAC class translation factor GTPase superfamily. Classic translation factor GTPase family. EF-Tu/EF-1A subfamily. In terms of assembly, monomer.

The protein resides in the cytoplasm. It carries out the reaction GTP + H2O = GDP + phosphate + H(+). Its function is as follows. GTP hydrolase that promotes the GTP-dependent binding of aminoacyl-tRNA to the A-site of ribosomes during protein biosynthesis. The polypeptide is Elongation factor Tu (Nitratidesulfovibrio vulgaris (strain DSM 19637 / Miyazaki F) (Desulfovibrio vulgaris)).